The sequence spans 167 residues: uncharacterized protein (167 aa).

This is an uncharacterized protein from Sus scrofa (Pig).